We begin with the raw amino-acid sequence, 987 residues long: Mediator of RNA polymerase II transcription subunit 24 (987 aa).

6 short sequence motifs (LXXLL motif) span residues 128–132 (LHWLL), 344–348 (LTPLL), 446–450 (LDLLL), 555–559 (LVALL), 786–790 (LPGLL), and 855–859 (LMRLL). Phosphoserine is present on residues S860 and S871.

This sequence belongs to the Mediator complex subunit 24 family. In terms of assembly, component of the Mediator complex, which is composed of MED1, MED4, MED6, MED7, MED8, MED9, MED10, MED11, MED12, MED13, MED13L, MED14, MED15, MED16, MED17, MED18, MED19, MED20, MED21, MED22, MED23, MED24, MED25, MED26, MED27, MED29, MED30, MED31, CCNC, CDK8 and CDC2L6/CDK11. The MED12, MED13, CCNC and CDK8 subunits form a distinct module termed the CDK8 module. Mediator containing the CDK8 module is less active than Mediator lacking this module in supporting transcriptional activation. Individual preparations of the Mediator complex lacking one or more distinct subunits have been variously termed ARC, CRSP, DRIP, PC2, SMCC and TRAP. Interacts with AR. Interacts with MED1 and MED10. Expressed in the adrenal gland, brain, epididymis, heart, kidney, liver, ovary, pancreas, prostate, skeletal muscle, small intestine, spleen, stomach, testis and thymus.

Its subcellular location is the nucleus. Its function is as follows. Component of the Mediator complex, a coactivator involved in the regulated transcription of nearly all RNA polymerase II-dependent genes. Mediator functions as a bridge to convey information from gene-specific regulatory proteins to the basal RNA polymerase II transcription machinery. Mediator is recruited to promoters by direct interactions with regulatory proteins and serves as a scaffold for the assembly of a functional preinitiation complex with RNA polymerase II and the general transcription factors. Required for basal and activator-dependent transcription. The chain is Mediator of RNA polymerase II transcription subunit 24 (Med24) from Mus musculus (Mouse).